Consider the following 415-residue polypeptide: Squalene synthase 2 (415 aa).

Helical transmembrane passes span 281 to 301 (AIFR…ALCY) and 392 to 412 (LIVI…SNLP).

The protein belongs to the phytoene/squalene synthase family. Requires Mg(2+) as cofactor. The cofactor is Mn(2+).

The protein resides in the endoplasmic reticulum membrane. It carries out the reaction 2 (2E,6E)-farnesyl diphosphate + NADH + H(+) = squalene + 2 diphosphate + NAD(+). It catalyses the reaction 2 (2E,6E)-farnesyl diphosphate + NADPH + H(+) = squalene + 2 diphosphate + NADP(+). It functions in the pathway terpene metabolism; lanosterol biosynthesis; lanosterol from farnesyl diphosphate: step 1/3. Component of the triterpene saponins (e.g. ginsenosides or panaxosides) and phytosterols biosynthetic pathways. Catalyzes the biosynthesis of squalene. This chain is Squalene synthase 2, found in Panax ginseng (Korean ginseng).